We begin with the raw amino-acid sequence, 410 residues long: Metacaspase-1B (410 aa).

Residues 1–106 (MYHRNSAPPP…SFGKGAPSNY (106 aa)) are disordered. Pro residues-rich tracts occupy residues 7-23 (APPP…PQSQ) and 32-52 (PPYP…PPPT). Catalysis depends on residues H201 and C257.

It belongs to the peptidase C14B family.

Involved in cell death (apoptosis). This is Metacaspase-1B (casB) from Aspergillus clavatus (strain ATCC 1007 / CBS 513.65 / DSM 816 / NCTC 3887 / NRRL 1 / QM 1276 / 107).